A 194-amino-acid chain; its full sequence is Molybdenum cofactor guanylyltransferase (194 aa).

Residues 12–14 (LAG), K25, D71, and D101 contribute to the GTP site. A Mg(2+)-binding site is contributed by D101.

The protein belongs to the MobA family. In terms of assembly, monomer. Mg(2+) serves as cofactor.

The protein resides in the cytoplasm. It carries out the reaction Mo-molybdopterin + GTP + H(+) = Mo-molybdopterin guanine dinucleotide + diphosphate. Its function is as follows. Transfers a GMP moiety from GTP to Mo-molybdopterin (Mo-MPT) cofactor (Moco or molybdenum cofactor) to form Mo-molybdopterin guanine dinucleotide (Mo-MGD) cofactor. The polypeptide is Molybdenum cofactor guanylyltransferase (Salmonella typhimurium (strain LT2 / SGSC1412 / ATCC 700720)).